The chain runs to 81 residues: Sulfur carrier protein TusA (81 aa).

Catalysis depends on Cys19, which acts as the Cysteine persulfide intermediate.

The protein belongs to the sulfur carrier protein TusA family.

The protein localises to the cytoplasm. In terms of biological role, sulfur carrier protein which probably makes part of a sulfur-relay system. This chain is Sulfur carrier protein TusA, found in Shewanella frigidimarina (strain NCIMB 400).